A 90-amino-acid chain; its full sequence is Probable Fe(2+)-trafficking protein (90 aa).

It belongs to the Fe(2+)-trafficking protein family.

In terms of biological role, could be a mediator in iron transactions between iron acquisition and iron-requiring processes, such as synthesis and/or repair of Fe-S clusters in biosynthetic enzymes. In Pseudomonas putida (strain W619), this protein is Probable Fe(2+)-trafficking protein.